We begin with the raw amino-acid sequence, 71 residues long: Sec-independent protein translocase protein TatA (71 aa).

The helical transmembrane segment at 1–21 (MGSFSIWHWLIVLVIVALIFG) threads the bilayer. Residues 48-71 (ADKTEQVTQQQTTIDVQAKEKQNS) form a disordered region.

Belongs to the TatA/E family. As to quaternary structure, the Tat system comprises two distinct complexes: a TatABC complex, containing multiple copies of TatA, TatB and TatC subunits, and a separate TatA complex, containing only TatA subunits. Substrates initially bind to the TatABC complex, which probably triggers association of the separate TatA complex to form the active translocon.

It localises to the cell inner membrane. Functionally, part of the twin-arginine translocation (Tat) system that transports large folded proteins containing a characteristic twin-arginine motif in their signal peptide across membranes. TatA could form the protein-conducting channel of the Tat system. The sequence is that of Sec-independent protein translocase protein TatA from Bordetella avium (strain 197N).